The following is a 177-amino-acid chain: Secretion monitor (177 aa).

Residues 1-30 (MIGILNRWRQFGRRYFWPHLLLGMVAASLG) form the signal peptide.

This sequence belongs to the SecM family.

Its subcellular location is the cytoplasm. It is found in the cytosol. It localises to the periplasm. Functionally, regulates secA expression by translational coupling of the secM secA operon. Translational pausing at a specific Pro residue 5 residues before the end of the protein may allow disruption of a mRNA repressor helix that normally suppresses secA translation initiation. The sequence is that of Secretion monitor from Yersinia enterocolitica serotype O:8 / biotype 1B (strain NCTC 13174 / 8081).